Reading from the N-terminus, the 307-residue chain is Probable inactive peptidyl-prolyl cis-trans isomerase-like 6 (307 aa).

In terms of domain architecture, PPIase cyclophilin-type spans 141 to 304 (FLDISIDLYP…QNCVITASGQ (164 aa)).

It belongs to the cyclophilin-type PPIase family.

Functionally, probable inactive PPIase with no peptidyl-prolyl cis-trans isomerase activity. This chain is Probable inactive peptidyl-prolyl cis-trans isomerase-like 6, found in Bos taurus (Bovine).